Consider the following 256-residue polypeptide: Stanniocalcin (256 aa).

The signal sequence occupies residues 1 to 18; the sequence is MLAKFGLCAVFLVLGTAA. Residues 19 to 33 constitute a propeptide that is removed on maturation; sequence TFDTDPEEASPRRAR. Asn-62 is a glycosylation site (N-linked (GlcNAc...) asparagine). The tract at residues 204–241 is disordered; that stretch reads QGSNQGPNSAPAGWRWPMGSPPSFKIQPSMRGRDPTHL.

It belongs to the stanniocalcin family. Homodimer; disulfide-linked. In terms of tissue distribution, produced and secreted by the corpuscles of Stannius.

The protein resides in the secreted. Functionally, its primary function is the prevention of hypercalcemia. Upon release into the circulation, it lowers calcium transport by the gills, thereby reducing its rate of influx from the environment into the extracellular compartment. STC also stimulates phosphate reabsorption by renal proximal tubules. The consequence of this action is increased levels of plasma phosphate, which combines with excess calcium and promotes its disposal into bone and scales. The protein is Stanniocalcin (stc) of Oncorhynchus mykiss (Rainbow trout).